Consider the following 423-residue polypeptide: Putative transmembrane protein ORF103 (423 aa).

A compositionally biased stretch (basic and acidic residues) spans 43–57 (EPKIEQEEPQQKPEV). The interval 43–91 (EPKIEQEEPQQKPEVVDVYSNETDKNEEEVSIITSEDEEEDEKGMLFKR) is disordered. The segment covering 67–84 (KNEEEVSIITSEDEEEDE) has biased composition (acidic residues). The next 2 membrane-spanning stretches (helical) occupy residues 125–145 (IIGI…VAVL) and 162–182 (FSLC…GLAI). Residues 253-282 (DESGSEVSSEDEESDQETLLRNRKMPTNSK) are disordered. 2 consecutive transmembrane segments (helical) span residues 326–346 (LISA…IVGS) and 366–386 (IPTL…MCVL).

The protein resides in the host membrane. The sequence is that of Putative transmembrane protein ORF103 from Magallana gigas (Pacific oyster).